The primary structure comprises 465 residues: Cysteine--tRNA ligase (465 aa).

Cys29 contacts Zn(2+). A 'HIGH' region motif is present at residues 31–41 (PTVYNYIHIGN). 3 residues coordinate Zn(2+): Cys209, His234, and Glu238. A 'KMSKS' region motif is present at residues 266–270 (KMSKS). Position 269 (Lys269) interacts with ATP. Ser270 is modified (phosphoserine).

It belongs to the class-I aminoacyl-tRNA synthetase family. In terms of assembly, monomer. It depends on Zn(2+) as a cofactor.

Its subcellular location is the cytoplasm. It carries out the reaction tRNA(Cys) + L-cysteine + ATP = L-cysteinyl-tRNA(Cys) + AMP + diphosphate. The polypeptide is Cysteine--tRNA ligase (Bacillus cereus (strain AH187)).